The following is a 349-amino-acid chain: Divinyl chlorophyll a/b light-harvesting protein PcbE (349 aa).

Helical transmembrane passes span 27–47, 65–85, 88–108, 201–221, 241–261, and 308–328; these read FIAAHIAHTGLIAFAAGGSTL, IFLAHLASIGIGFDEAGAWTG, VASIAIVHLVLSMVYGAGGLL, VLGGHAFLAFLEITGGAFHIA, AILSFSCAGLGWMAVVAAFWC, and LANVHYYFGFFFLQGHLWHAL.

It belongs to the PsbB/PsbC family. IsiA/Pcb subfamily. As to quaternary structure, the antenna complex consists of divinyl chlorophylls (a and b) and divinyl chlorophyll a/b binding proteins and binds more divinyl chlorophyll b than does the antenna complex from high-light-adapted Prochlorococcus. Divinyl chlorophyll a serves as cofactor. Divinyl chlorophyll b is required as a cofactor.

The protein localises to the cellular thylakoid membrane. Functionally, the antenna complex functions as a light receptor, it captures and delivers excitation energy to photosystems II and I. The Prochlorales pcb genes are not related to higher plant LHCs. The protein is Divinyl chlorophyll a/b light-harvesting protein PcbE (pcbE) of Prochlorococcus marinus (strain NATL2A).